The primary structure comprises 596 residues: Malto-oligosyltrehalose trehalohydrolase (596 aa).

263 to 268 (RLDAVH) lines the substrate pocket. The active-site Nucleophile is the aspartate 265. The active-site Proton donor is glutamate 302. Substrate-binding positions include 327–331 (DDFHH) and 397–402 (HDQIGN).

It belongs to the glycosyl hydrolase 13 family.

The protein resides in the cytoplasm. The enzyme catalyses hydrolysis of (1-&gt;4)-alpha-D-glucosidic linkage in 4-alpha-D-[(1-&gt;4)-alpha-D-glucanosyl]n trehalose to yield trehalose and (1-&gt;4)-alpha-D-glucan.. It participates in glycan biosynthesis; trehalose biosynthesis. The polypeptide is Malto-oligosyltrehalose trehalohydrolase (treZ) (Rhizobium sp. (strain M-11)).